Consider the following 234-residue polypeptide: uncharacterized protein (234 aa).

This is an uncharacterized protein from Methanocaldococcus jannaschii (strain ATCC 43067 / DSM 2661 / JAL-1 / JCM 10045 / NBRC 100440) (Methanococcus jannaschii).